The primary structure comprises 255 residues: 3-deoxy-manno-octulosonate cytidylyltransferase (255 aa).

This sequence belongs to the KdsB family.

Its subcellular location is the cytoplasm. The catalysed reaction is 3-deoxy-alpha-D-manno-oct-2-ulosonate + CTP = CMP-3-deoxy-beta-D-manno-octulosonate + diphosphate. It participates in nucleotide-sugar biosynthesis; CMP-3-deoxy-D-manno-octulosonate biosynthesis; CMP-3-deoxy-D-manno-octulosonate from 3-deoxy-D-manno-octulosonate and CTP: step 1/1. Its pathway is bacterial outer membrane biogenesis; lipopolysaccharide biosynthesis. Its function is as follows. Activates KDO (a required 8-carbon sugar) for incorporation into bacterial lipopolysaccharide in Gram-negative bacteria. The protein is 3-deoxy-manno-octulosonate cytidylyltransferase of Xanthobacter autotrophicus (strain ATCC BAA-1158 / Py2).